Here is a 229-residue protein sequence, read N- to C-terminus: Demethylmenaquinone methyltransferase (229 aa).

S-adenosyl-L-methionine-binding positions include Thr-57, Asp-77, and 101-102 (DV).

Belongs to the class I-like SAM-binding methyltransferase superfamily. MenG/UbiE family.

The enzyme catalyses a 2-demethylmenaquinol + S-adenosyl-L-methionine = a menaquinol + S-adenosyl-L-homocysteine + H(+). The protein operates within quinol/quinone metabolism; menaquinone biosynthesis; menaquinol from 1,4-dihydroxy-2-naphthoate: step 2/2. Its function is as follows. Methyltransferase required for the conversion of demethylmenaquinol (DMKH2) to menaquinol (MKH2). In Chlamydia muridarum (strain MoPn / Nigg), this protein is Demethylmenaquinone methyltransferase.